The following is a 92-amino-acid chain: Defensin Lucifensin (92 aa).

An N-terminal signal peptide occupies residues 1–23 (MKFFMVFAVTFCLALSFVSQSLA). The propeptide occupies 24–52 (LPADDEAHFVDGLEALKTIEPELHGRYKR). 3 disulfide bridges follow: Cys55–Cys82, Cys68–Cys88, and Cys72–Cys90.

This sequence belongs to the invertebrate defensin family. Type 1 subfamily. In terms of processing, the disulfide bonds are essential for antimicrobial activity. In terms of tissue distribution, larval fat body, hemolymph and salivary glands (at protein level). Expressed in the salivary glands of all larval stages.

It localises to the secreted. The protein localises to the host cell membrane. Its function is as follows. Shows strong antibacterial activity against numerous Gram-positive bacteria. It selectively inhibits peptidoglycan biosynthesis through complex formation with the cell wall precursor lipid II (1:1 molar ratio) thus inhibiting cell wall synthesis. Shows antibacterial activity against the Gram-positive bacteria M.luteus, E.fecalis (MIC=32 mg/L), S.aureus (MIC=16 mg/L), S.carnosus (MIC=2 mg/L), S.pneumoniae (MIC=2 mg/L) and S.pyogenes (MIC=2 mg/L) and against a number of methicillin-resistant S.aureus and glycopeptide-intermediate S.aureus isolates. Does not show antibacterial activity against Gram-negative bacteria or antifungal activity against C.utilis. Shows slight antifungal activity against C.albicans. This Lucilia sericata (Green bottle fly) protein is Defensin Lucifensin.